We begin with the raw amino-acid sequence, 382 residues long: Secreted triacylglycerol lipase LIP5 (382 aa).

The cysteines at positions 40 and 211 are disulfide-linked. N-linked (GlcNAc...) asparagine glycosylation occurs at N115. S124 serves as the catalytic Nucleophile. N157 and N232 each carry an N-linked (GlcNAc...) asparagine glycan. Active-site residues include D271 and H305. N346 is a glycosylation site (N-linked (GlcNAc...) asparagine).

It belongs to the AB hydrolase superfamily. Lipase family. Class Lip subfamily.

It is found in the secreted. It catalyses the reaction a triacylglycerol + H2O = a diacylglycerol + a fatty acid + H(+). It carries out the reaction a monoacylglycerol + H2O = glycerol + a fatty acid + H(+). The catalysed reaction is a diacylglycerol + H2O = a monoacylglycerol + a fatty acid + H(+). Its function is as follows. Secreted lipase that hydrolyzes acylglycerol lipids such as triacylglycerols and consequently releases free fatty acid. Can hydrolyze 4-nitrophenyl palmitate to release 4-nitrophenol and palmitoic acid. Due to an absence of fatty acid synthase genes in Malassezia species, secretory lipases are essential for the yeast to generate free fatty acids from degradation of sebum and assimilate them as lipid sources for growth. Plays important roles not only in lipid metabolism but also in the immune response of host cells and pathogenesis. The polypeptide is Secreted triacylglycerol lipase LIP5 (Malassezia furfur (Pityriasis versicolor infection agent)).